Reading from the N-terminus, the 406-residue chain is uncharacterized protein (406 aa).

5 consecutive transmembrane segments (helical) span residues 7–27 (LCTN…YYLF), 31–51 (YFNI…YGSV), 65–85 (LIFI…SEII), 92–112 (IFYF…SFIL), and 191–211 (ISLI…SSFF). Positions 259–331 (TLNVPISTNN…TGTNNNVVDN (73 aa)) are disordered. Positions 262–291 (VPISTNNTDNLNSVKTNQQFNTPVAKSNTK) are enriched in polar residues. The segment covering 292–303 (SNRRKKTGKKIR) has biased composition (basic residues). The segment covering 306–318 (NQTTSSNSSNNQS) has biased composition (low complexity). Residues 319 to 330 (PESTGTNNNVVD) are compositionally biased toward polar residues.

Its subcellular location is the membrane. This is an uncharacterized protein from Acanthamoeba polyphaga (Amoeba).